The primary structure comprises 436 residues: 3-ketoacyl-CoA thiolase (436 aa).

Cys99 acts as the Acyl-thioester intermediate in catalysis. Active-site proton acceptor residues include His392 and Cys422.

It belongs to the thiolase-like superfamily. Thiolase family. Heterotetramer of two alpha chains (FadJ) and two beta chains (FadI).

The protein resides in the cytoplasm. It carries out the reaction an acyl-CoA + acetyl-CoA = a 3-oxoacyl-CoA + CoA. It functions in the pathway lipid metabolism; fatty acid beta-oxidation. Catalyzes the final step of fatty acid oxidation in which acetyl-CoA is released and the CoA ester of a fatty acid two carbons shorter is formed. This is 3-ketoacyl-CoA thiolase from Shigella flexneri serotype 5b (strain 8401).